A 328-amino-acid polypeptide reads, in one-letter code: MAGHRPSNHFCPLPGSGGGGPRGPMPLRVDTLTWLSTQAAPGRVMVWPAVRPGICPGPDVWRIPLGPLPHEFRGWIAPCRPRLGASEAGDWLRRPSEGALPGPYIALRSIPKLPPPEDISGILKELQQLAKELRQKRLSLGYSQADVGIAVGALFGKVLSQTTICRFEAQQLSVANMWKLRPLLKKWLKEVEAENLLGLCKMEMILQQSGKWRRASRERRIGNSLEKFFQRCPKPTPQQISHIAGCLQLQKDVVRVWFYNRSKMGSRPTNDASPREIVGTAGPPCPGAPVCFHLGLGLPVDIPHYTRLYSAGVAHSSAPATTLGLLRF.

The tract at residues 1-25 is disordered; sequence MAGHRPSNHFCPLPGSGGGGPRGPM. Residues 118 to 192 form the POU-specific domain; the sequence is DISGILKELQ…LLKKWLKEVE (75 aa). Residues 210-269 constitute a DNA-binding region (homeobox); it reads GKWRRASRERRIGNSLEKFFQRCPKPTPQQISHIAGCLQLQKDVVRVWFYNRSKMGSRPT.

The protein belongs to the POU transcription factor family. Class-5 subfamily. As to expression, expressed in skeletal and cardiac muscles, brain, heart and lung. Little or no detectable expression found in pancreas, kidney, liver or placenta.

The protein resides in the nucleus. In terms of biological role, transcription factor that binds preferentially to the octamer motif (5'-ATGTTAAT-3'). May exert a regulatory function in meiotic events that are required for terminal differentiation of male germ cell. This chain is POU domain, class 5, transcription factor 2 (POU5F2), found in Homo sapiens (Human).